Here is a 154-residue protein sequence, read N- to C-terminus: Methylglyoxal synthase (154 aa).

One can recognise an MGS-like domain in the interval 1 to 154; sequence MELTTRTIAA…RYMQQRLDLK (154 aa). Substrate contacts are provided by residues His19, Lys23, 45 to 48, and 65 to 66; these read TGTT and SG. Asp71 acts as the Proton donor/acceptor in catalysis. His98 contributes to the substrate binding site.

The protein belongs to the methylglyoxal synthase family.

It catalyses the reaction dihydroxyacetone phosphate = methylglyoxal + phosphate. Catalyzes the formation of methylglyoxal from dihydroxyacetone phosphate. The protein is Methylglyoxal synthase of Yersinia pseudotuberculosis serotype O:1b (strain IP 31758).